We begin with the raw amino-acid sequence, 553 residues long: Glutamate--tRNA ligase (553 aa).

Positions 103-113 match the 'HIGH' region motif; it reads PNPSGPLHIGH.

The protein belongs to the class-I aminoacyl-tRNA synthetase family. Glutamate--tRNA ligase type 2 subfamily.

It is found in the cytoplasm. The catalysed reaction is tRNA(Glu) + L-glutamate + ATP = L-glutamyl-tRNA(Glu) + AMP + diphosphate. Its function is as follows. Catalyzes the attachment of glutamate to tRNA(Glu) in a two-step reaction: glutamate is first activated by ATP to form Glu-AMP and then transferred to the acceptor end of tRNA(Glu). The chain is Glutamate--tRNA ligase from Methanothermobacter thermautotrophicus (strain ATCC 29096 / DSM 1053 / JCM 10044 / NBRC 100330 / Delta H) (Methanobacterium thermoautotrophicum).